A 337-amino-acid polypeptide reads, in one-letter code: Glucose transporter 2C (337 aa).

The segment at 1-22 is disordered; the sequence is MTERRDNVSHAPDAIEGPNDGA. Topologically, residues 1–43 are cytoplasmic; sequence MTERRDNVSHAPDAIEGPNDGAHAEDTSPGFFSLENLGVAQVQ. A helical transmembrane segment spans residues 44-64; sequence VVGGTLNGFSIGFVAVYILLY. Topologically, residues 65–119 are extracellular; the sequence is EVATNCSLFKTTEACKAVGSYGCEWKDTEVCSWKKECDSDSDGVNPCESLIGYSS. Asn-69 carries N-linked (GlcNAc...) asparagine glycosylation. The helical transmembrane segment at 120–140 threads the bilayer; sequence LYSGIFASAMIVGSMVGSIIA. At 141 to 152 the chain is on the cytoplasmic side; that stretch reads GKCITMFGLKKS. A helical transmembrane segment spans residues 153 to 173; that stretch reads FIIVGVMSVVASALNHISVAT. The Extracellular segment spans residues 174–175; that stretch reads NE. Residues 176-196 form a helical membrane-spanning segment; it reads FWVLCAGRVLMGIGLGVVCVI. Residues 197–214 lie on the Cytoplasmic side of the membrane; that stretch reads CPMYVNENAHPKLSKVDG. Residues 215-235 traverse the membrane as a helical segment; it reads VLFQVFITFGIMLAAMLGLIL. Over 236 to 250 the chain is Extracellular; that stretch reads DKTVNYDNDPDMAGR. Residues 251–271 form a helical membrane-spanning segment; it reads FHGFCAVSSVLSVAMFLVGMF. Over 272–300 the chain is Cytoplasmic; it reads LRESTATFSQDDDGKADGGMDPNEYGWGQ. The chain crosses the membrane as a helical span at residues 301 to 321; that stretch reads MLWPLFMGAVTAGTLQLTGIN. At 322–337 the chain is on the extracellular side; sequence AVMNYAPKITENLGMD.

The protein belongs to the major facilitator superfamily. Sugar transporter (TC 2.A.1.1) family.

The protein resides in the membrane. Facilitative glucose transporter. This Trypanosoma brucei brucei protein is Glucose transporter 2C (THT2C).